Consider the following 290-residue polypeptide: 33 kDa chaperonin (290 aa).

2 disulfides stabilise this stretch: cysteine 234–cysteine 236 and cysteine 267–cysteine 270.

Belongs to the HSP33 family. In terms of processing, under oxidizing conditions two disulfide bonds are formed involving the reactive cysteines. Under reducing conditions zinc is bound to the reactive cysteines and the protein is inactive.

Its subcellular location is the cytoplasm. Its function is as follows. Redox regulated molecular chaperone. Protects both thermally unfolding and oxidatively damaged proteins from irreversible aggregation. Plays an important role in the bacterial defense system toward oxidative stress. The chain is 33 kDa chaperonin from Colwellia psychrerythraea (strain 34H / ATCC BAA-681) (Vibrio psychroerythus).